The following is a 213-amino-acid chain: Large ribosomal subunit protein uL3 (213 aa).

The interval 124–151 (KRHGQSRGPMAHGSRYHRRPGSMGSIAP) is disordered.

Belongs to the universal ribosomal protein uL3 family. Part of the 50S ribosomal subunit. Forms a cluster with proteins L14 and L19.

Functionally, one of the primary rRNA binding proteins, it binds directly near the 3'-end of the 23S rRNA, where it nucleates assembly of the 50S subunit. This is Large ribosomal subunit protein uL3 from Geobacillus kaustophilus (strain HTA426).